The following is a 448-amino-acid chain: MAFDAAMSTHEDLLATIRYVRDRTGDPNAWQTGLTPTEVTAVVTSTTRSEQLDAILRKIRQRHSNLYYPAPPDREQGDAARAIADAEAALAHQNSATAQLDLQVVSAILNAHLKTVEGGESLHELQQEIEAAVRIRSDLDTPAGARDFQRFLIGKLKDIREVVATASLDAASKSALMAAWTSLYDASKGDRGDADDRGPASVGSGGAPARGAGQQPELPTRAEPDCLLDSLLLEDPGLLADDLQVPGGTSAAIPSASSTPSLPNLGGATMPGGGATPALVPGVSAPGGLPLSGLLRGVGDEPELTDFDERGQEVRDPADYEHSNEPDERRADDREGADEDAGLGKSESPPQAPTTVTLPNGETVTAASPQLAAAIKAAASGTPIADAFQQQGIAIPLPGTAVANPVDPARISAGDVGVFTATPLPLALAKLFWTARFNTSQPCEGQTF.

The segment covering 187–198 (SKGDRGDADDRG) has biased composition (basic and acidic residues). 3 disordered regions span residues 187–221 (SKGD…LPTR), 243–270 (LQVP…GATM), and 291–361 (LSGL…LPNG). Over residues 243 to 261 (LQVPGGTSAAIPSASSTPS) the composition is skewed to low complexity. Residues 307–334 (FDERGQEVRDPADYEHSNEPDERRADDR) show a composition bias toward basic and acidic residues.

The protein to M.tuberculosis Rv0025 and Rv0739.

This is an uncharacterized protein from Mycobacterium tuberculosis (strain ATCC 25618 / H37Rv).